The sequence spans 425 residues: Serine--tRNA ligase (425 aa).

228 to 230 serves as a coordination point for L-serine; that stretch reads TAE. 259 to 261 serves as a coordination point for ATP; it reads RSE. Glu-282 lines the L-serine pocket. 346 to 349 is an ATP binding site; that stretch reads EIAS. Ser-382 provides a ligand contact to L-serine.

The protein belongs to the class-II aminoacyl-tRNA synthetase family. Type-1 seryl-tRNA synthetase subfamily. As to quaternary structure, homodimer. The tRNA molecule binds across the dimer.

The protein resides in the cytoplasm. The enzyme catalyses tRNA(Ser) + L-serine + ATP = L-seryl-tRNA(Ser) + AMP + diphosphate + H(+). The catalysed reaction is tRNA(Sec) + L-serine + ATP = L-seryl-tRNA(Sec) + AMP + diphosphate + H(+). It participates in aminoacyl-tRNA biosynthesis; selenocysteinyl-tRNA(Sec) biosynthesis; L-seryl-tRNA(Sec) from L-serine and tRNA(Sec): step 1/1. In terms of biological role, catalyzes the attachment of serine to tRNA(Ser). Is also able to aminoacylate tRNA(Sec) with serine, to form the misacylated tRNA L-seryl-tRNA(Sec), which will be further converted into selenocysteinyl-tRNA(Sec). The protein is Serine--tRNA ligase of Rickettsia rickettsii (strain Iowa).